The chain runs to 1010 residues: 2-oxoglutarate dehydrogenase-like, mitochondrial (1010 aa).

Residues 1-107 (MSQLRLLLFR…RASVSSCTKT (107 aa)) constitute a mitochondrion transit peptide. The disordered stretch occupies residues 28–47 (GGRRRSSGPPTTIPRSRGGV). Residues His-130, Asp-143, and Asp-145 each contribute to the Ca(2+) site. Residues Arg-299, Asp-398, Asn-431, Ile-433, and Gln-663 each coordinate thiamine diphosphate. 3 residues coordinate Mg(2+): Asp-398, Asn-431, and Ile-433.

Belongs to the alpha-ketoglutarate dehydrogenase family. As to quaternary structure, the OGDHC complex comprises multiple copies of three catalytic enzyme components, the 2-oxoglutarate dehydrogenase (OGDH/E1), the dihydrolipoamide dehydrogenase (DLST/E2) and the dihydrolipoamide dehydrogenase (DLD/E3). OGDHL/E1-like isoenzyme may replace OGDH in the OGDHC complex in the brain. The presence of either ODGH/E1 or ODGHL/E1-like isoenzyme in the complex may depend on its tissular distribution. It depends on thiamine diphosphate as a cofactor. The cofactor is Mg(2+). The OGDHL-containing OGDHC complex is present in the brain, but not in the heart.

It is found in the mitochondrion matrix. It catalyses the reaction N(6)-[(R)-lipoyl]-L-lysyl-[protein] + 2-oxoglutarate + H(+) = N(6)-[(R)-S(8)-succinyldihydrolipoyl]-L-lysyl-[protein] + CO2. 2-oxoglutarate dehydrogenase (E1-like) component of the 2-oxoglutarate dehydrogenase multienzyme complex (OGDHC) which mediates the decarboxylation of alpha-ketoglutarate in the tricarboxylic acid cycle. The OGDHC complex catalyzes the overall conversion of 2-oxoglutarate to succinyl-CoA and CO(2) while reducing NAD(+) to NADH. The OGDHC complex is mainly active in the mitochondrion. Involved in the inhibition of cell proliferation and in apoptosis. This is 2-oxoglutarate dehydrogenase-like, mitochondrial from Rattus norvegicus (Rat).